We begin with the raw amino-acid sequence, 350 residues long: Ion-translocating oxidoreductase complex subunit D (350 aa).

5 helical membrane-spanning segments follow: residues Ile-20–Gly-40, Gly-42–Leu-62, Pro-68–Ser-88, Ile-89–Ala-109, and Pro-123–Leu-143. Position 187 is an FMN phosphoryl threonine (Thr-187). The next 5 membrane-spanning stretches (helical) occupy residues Leu-215–Leu-235, Ile-244–Gly-264, Leu-267–Leu-287, Leu-301–Pro-321, and Asp-322–Thr-342.

It belongs to the NqrB/RnfD family. As to quaternary structure, the complex is composed of six subunits: RnfA, RnfB, RnfC, RnfD, RnfE and RnfG. It depends on FMN as a cofactor.

The protein resides in the cell inner membrane. Functionally, part of a membrane-bound complex that couples electron transfer with translocation of ions across the membrane. In Citrobacter koseri (strain ATCC BAA-895 / CDC 4225-83 / SGSC4696), this protein is Ion-translocating oxidoreductase complex subunit D.